The primary structure comprises 258 residues: Glutamate racemase (258 aa).

Substrate-binding positions include 11–12 and 43–44; these read DS and YG. The Proton donor/acceptor role is filled by Cys74. Residue 75 to 76 coordinates substrate; sequence NT. Cys182 functions as the Proton donor/acceptor in the catalytic mechanism. 183-184 provides a ligand contact to substrate; sequence TH.

It belongs to the aspartate/glutamate racemases family.

It catalyses the reaction L-glutamate = D-glutamate. Its pathway is cell wall biogenesis; peptidoglycan biosynthesis. In terms of biological role, provides the (R)-glutamate required for cell wall biosynthesis. The chain is Glutamate racemase from Leptospira borgpetersenii serovar Hardjo-bovis (strain JB197).